Reading from the N-terminus, the 443-residue chain is Exodeoxyribonuclease 7 large subunit (443 aa).

It belongs to the XseA family. In terms of assembly, heterooligomer composed of large and small subunits.

It is found in the cytoplasm. It carries out the reaction Exonucleolytic cleavage in either 5'- to 3'- or 3'- to 5'-direction to yield nucleoside 5'-phosphates.. Its function is as follows. Bidirectionally degrades single-stranded DNA into large acid-insoluble oligonucleotides, which are then degraded further into small acid-soluble oligonucleotides. The sequence is that of Exodeoxyribonuclease 7 large subunit from Vibrio vulnificus (strain YJ016).